Reading from the N-terminus, the 124-residue chain is Small ribosomal subunit protein uS12 (124 aa).

The disordered stretch occupies residues 1–20 (MATISQLVRNPRKDKVQKTS). Position 89 is a 3-methylthioaspartic acid (Asp89). The interval 104–124 (TSGVTARRKGRSKYGAKRPKA) is disordered. Residues 109 to 124 (ARRKGRSKYGAKRPKA) are compositionally biased toward basic residues.

Belongs to the universal ribosomal protein uS12 family. Part of the 30S ribosomal subunit. Contacts proteins S8 and S17. May interact with IF1 in the 30S initiation complex.

With S4 and S5 plays an important role in translational accuracy. Its function is as follows. Interacts with and stabilizes bases of the 16S rRNA that are involved in tRNA selection in the A site and with the mRNA backbone. Located at the interface of the 30S and 50S subunits, it traverses the body of the 30S subunit contacting proteins on the other side and probably holding the rRNA structure together. The combined cluster of proteins S8, S12 and S17 appears to hold together the shoulder and platform of the 30S subunit. The protein is Small ribosomal subunit protein uS12 of Psychromonas ingrahamii (strain DSM 17664 / CCUG 51855 / 37).